Reading from the N-terminus, the 174-residue chain is MMKSLFIASTMVLMAFPAFAESTTVKMYEALPTGPGKEVGTVVISEAPGGLHFKVNMEKLTPGYHGFHVHENPSCAPGEKDGKIVPALAAGGHYDPGNTHHHLGPEGDGHMGDLPRLSANADGKVSETVVAPHLKKLAEIKQRSLMVHVGGDNYSDKPEPLGGGGARFACGVIE.

The first 20 residues, 1–20 (MMKSLFIASTMVLMAFPAFA), serve as a signal peptide directing secretion. Cu cation is bound by residues His-68, His-70, and His-93. A disulfide bridge links Cys-75 with Cys-170. Residues His-93, His-102, His-110, and Asp-113 each contribute to the Zn(2+) site. His-148 is a binding site for Cu cation.

Belongs to the Cu-Zn superoxide dismutase family. Homodimer. Cu cation serves as cofactor. Requires Zn(2+) as cofactor.

It localises to the periplasm. It catalyses the reaction 2 superoxide + 2 H(+) = H2O2 + O2. Its function is as follows. Destroys radicals which are normally produced within the cells and which are toxic to biological systems. The polypeptide is Superoxide dismutase [Cu-Zn] (sodC) (Brucella melitensis biotype 1 (strain ATCC 23456 / CCUG 17765 / NCTC 10094 / 16M)).